A 149-amino-acid chain; its full sequence is uncharacterized protein (149 aa).

A compositionally biased stretch (basic and acidic residues) spans 130–144 (ESNVTKENIEIKEEK). Residues 130–149 (ESNVTKENIEIKEEKEENSE) are disordered.

This is an uncharacterized protein from Methanocaldococcus jannaschii (strain ATCC 43067 / DSM 2661 / JAL-1 / JCM 10045 / NBRC 100440) (Methanococcus jannaschii).